We begin with the raw amino-acid sequence, 66 residues long: Large ribosomal subunit protein bL33c (66 aa).

The protein belongs to the bacterial ribosomal protein bL33 family.

The protein localises to the plastid. It is found in the chloroplast. This Dioscorea elephantipes (Elephant's foot yam) protein is Large ribosomal subunit protein bL33c.